A 286-amino-acid polypeptide reads, in one-letter code: Main hemagglutinin component type C (286 aa).

Residues 2-55 form a 1-alpha repeat; the sequence is SQTNANDLRNNEVFFISPSNNTNKVLDKISQSEVKLWNKLSGANQKWRLIYDTN. Ricin B-type lectin domains are found at residues 12–140 and 180–284; these read NEVF…FKFS and DSSR…WIIN. A 1-beta repeat occupies 56 to 100; that stretch reads KQAYKIKVMDNTSLILTWNAPLSSVSVKTDTNGDNQYWYLLQNYI. The 1-gamma repeat unit spans residues 101-148; sequence SRNVIIRNYMNPNLVLQYNIDDTLMVSTQTSSSNQFFKFSNCIYEALN. A 2-alpha repeat occupies 149-193; sequence NRNCKLQTQLNSDRFLSKNLNSQIIVLWQWFDSSRQKWIIEYNET. A sugar-binding site 1 region spans residues 167–183; sequence NLNSQIIVLWQWFDSSR. The 2-beta repeat unit spans residues 194–239; it reads KSAYTLKCQENNRYLTWIQNSNNYVETYQSTDSLIQYWNINYLDND. The stretch at 240–286 is one 2-gamma repeat; the sequence is ASKYILYNLQDTNRVLDVYNSQIANGTHVIVDSYHGNTNQQWIINLI. The sugar-binding site 2 stretch occupies residues 256–279; the sequence is DVYNSQIANGTHVIVDSYHGNTNQ.

In terms of assembly, botulinum toxins are produced as progenitor toxins of large molecular sizes of 12S (M toxin) and 16S (L toxin). M toxin consists of a non-toxic, non-hemagglutinin component (NTNHA) and the neurotoxin. L toxin consists of the M toxin and the 3 subcomponents of hemagglutinin (HA). HA is composed of subcomponents of 70, 33, and 17 kDa. The 70 kDa subcomponent undergoes proteolytic processing and is split into HA-55 (also called HA-53 and HA3b) and HA-22-23 (also called HA3a). The stoichiometry of the whole complex has been modeled as one BoNT/C, one NTNHA, three HA-70, six HA-33 and three HA-17.

The protein localises to the secreted. Its function is as follows. Agglutinates human erythrocytes. The hemagglutinin (HA) component of the progenitor toxin protects the structural integrity of botulinum neurotoxin; may increase internalization of the neurotoxin into the bloodstream of the host. The hemagglutinin (HA) component is involved in binding to the upper small intestine through interactions with glycolipids and glycoproteins containing sialic acid moieties. Binds galactose or oligosaccharides with galactose at their non-reducing end. Binds eukaryotic host mucins; binding is inhibited by N-acetyl-beta-neuraminic acid, N-acetyl-D-galactosamine, galactose, and methyl N-acetyl-beta-neuraminic acid. Binds N-acetyl-beta-neuraminic acid, N-acetyl-D-galactosamine and galactose (but not glucose) via 2 sites. The sequence is that of Main hemagglutinin component type C from Clostridium botulinum C (Clostridium botulinum C bacteriophage).